The sequence spans 261 residues: MADAGQQRPLTAFAPPPPLWKHFTPDNLKKLDEIKKNASKGEDGKPQKKKWTPTELRALDVPPELHFLVPPEIPKSGHYSVFGELQSLSTALPSLQDQGITQLYPSPPTGDADREQPSEPSQPLNHAYYLLKISKSLLLNFLEFVGILSVAPEQFESKVEDLRNLFINAHHLLNLYRPHQARESLILMMEEQLSRTREEIQQMDKLKEEITGALEQLKKDGVDVDAAPIEAPDNDTKKPNVSEEKAIEDTRLVWELLDENN.

Disordered regions lie at residues Met-1–Leu-56, Gly-99–Ser-121, and Asp-223–Glu-244. Over residues Phe-23–Pro-46 the composition is skewed to basic and acidic residues. Residues Asn-234–Glu-244 are compositionally biased toward basic and acidic residues.

This sequence belongs to the Mediator complex subunit 7 family. Component of the Mediator complex.

The protein localises to the nucleus. Its function is as follows. Component of the Mediator complex, a coactivator involved in the regulated transcription of nearly all RNA polymerase II-dependent genes. Mediator functions as a bridge to convey information from gene-specific regulatory proteins to the basal RNA polymerase II transcription machinery. Mediator is recruited to promoters by direct interactions with regulatory proteins and serves as a scaffold for the assembly of a functional preinitiation complex with RNA polymerase II and the general transcription factors. In Aspergillus oryzae (strain ATCC 42149 / RIB 40) (Yellow koji mold), this protein is Mediator of RNA polymerase II transcription subunit 7 (med7).